The sequence spans 83 residues: Cytochrome b559 subunit alpha (83 aa).

A helical membrane pass occupies residues 21-35 (VIHSITIPSLFIAGW). Histidine 23 contributes to the heme binding site.

It belongs to the PsbE/PsbF family. Heterodimer of an alpha subunit and a beta subunit. PSII is composed of 1 copy each of membrane proteins PsbA, PsbB, PsbC, PsbD, PsbE, PsbF, PsbH, PsbI, PsbJ, PsbK, PsbL, PsbM, PsbT, PsbX, PsbY, PsbZ, Psb30/Ycf12, at least 3 peripheral proteins of the oxygen-evolving complex and a large number of cofactors. It forms dimeric complexes. Heme b serves as cofactor.

It localises to the plastid. It is found in the chloroplast thylakoid membrane. This b-type cytochrome is tightly associated with the reaction center of photosystem II (PSII). PSII is a light-driven water:plastoquinone oxidoreductase that uses light energy to abstract electrons from H(2)O, generating O(2) and a proton gradient subsequently used for ATP formation. It consists of a core antenna complex that captures photons, and an electron transfer chain that converts photonic excitation into a charge separation. The protein is Cytochrome b559 subunit alpha of Chaetosphaeridium globosum (Charophycean green alga).